A 155-amino-acid chain; its full sequence is MYDLLEQKFFVREIKFASAYYLRTGKALNNSKTPIFQRKHSLPAWLSSAVIITAPVSNDGSHSILFARKTLRMIMPMFSPLFNRSPDDCPSHLTATHIFQQFSAMLDYGQSTKEATNKRRLIKGSDLLVALDRNCIPSAPFVPEIALRKSGAVGS.

This is an uncharacterized protein from Saccharomyces cerevisiae (strain ATCC 204508 / S288c) (Baker's yeast).